The chain runs to 331 residues: Ribose-phosphate pyrophosphokinase (331 aa).

55-57 (DGE) is an ATP binding site. Mg(2+) contacts are provided by His-148 and Asp-187. Lys-211 is an active-site residue. D-ribose 5-phosphate is bound by residues Arg-213, Asp-237, and 241 to 245 (DTAGT).

It belongs to the ribose-phosphate pyrophosphokinase family. Class I subfamily. As to quaternary structure, homohexamer. It depends on Mg(2+) as a cofactor.

The protein resides in the cytoplasm. The enzyme catalyses D-ribose 5-phosphate + ATP = 5-phospho-alpha-D-ribose 1-diphosphate + AMP + H(+). Its pathway is metabolic intermediate biosynthesis; 5-phospho-alpha-D-ribose 1-diphosphate biosynthesis; 5-phospho-alpha-D-ribose 1-diphosphate from D-ribose 5-phosphate (route I): step 1/1. In terms of biological role, involved in the biosynthesis of the central metabolite phospho-alpha-D-ribosyl-1-pyrophosphate (PRPP) via the transfer of pyrophosphoryl group from ATP to 1-hydroxyl of ribose-5-phosphate (Rib-5-P). The protein is Ribose-phosphate pyrophosphokinase of Synechococcus elongatus (strain ATCC 33912 / PCC 7942 / FACHB-805) (Anacystis nidulans R2).